A 331-amino-acid chain; its full sequence is L-lactate dehydrogenase A chain (331 aa).

NAD(+)-binding positions include 29–57 and Arg98; that span reads GMVG…MEDK. Substrate is bound by residues Arg105, Asn137, and Arg168. Residue Asn137 participates in NAD(+) binding. Residue His192 is the Proton acceptor of the active site. Thr247 provides a ligand contact to substrate.

The protein belongs to the LDH/MDH superfamily. LDH family. Homotetramer.

Its subcellular location is the cytoplasm. The enzyme catalyses (S)-lactate + NAD(+) = pyruvate + NADH + H(+). Its pathway is fermentation; pyruvate fermentation to lactate; (S)-lactate from pyruvate: step 1/1. In terms of biological role, interconverts simultaneously and stereospecifically pyruvate and lactate with concomitant interconversion of NADH and NAD(+). This is L-lactate dehydrogenase A chain (ldha) from Notothenia angustata (Rockcod).